A 157-amino-acid polypeptide reads, in one-letter code: Transcription elongation factor GreA (157 aa).

The stretch at 17–37 (ELERLLKLRPQISEAIAEARE) forms a coiled coil.

The protein belongs to the GreA/GreB family.

In terms of biological role, necessary for efficient RNA polymerase transcription elongation past template-encoded arresting sites. The arresting sites in DNA have the property of trapping a certain fraction of elongating RNA polymerases that pass through, resulting in locked ternary complexes. Cleavage of the nascent transcript by cleavage factors such as GreA or GreB allows the resumption of elongation from the new 3'terminus. GreA releases sequences of 2 to 3 nucleotides. The protein is Transcription elongation factor GreA of Vibrio parahaemolyticus serotype O3:K6 (strain RIMD 2210633).